The chain runs to 126 residues: Large ribosomal subunit protein bL12 (126 aa).

Belongs to the bacterial ribosomal protein bL12 family. As to quaternary structure, homodimer. Part of the ribosomal stalk of the 50S ribosomal subunit. Forms a multimeric L10(L12)X complex, where L10 forms an elongated spine to which 2 to 4 L12 dimers bind in a sequential fashion. Binds GTP-bound translation factors.

In terms of biological role, forms part of the ribosomal stalk which helps the ribosome interact with GTP-bound translation factors. Is thus essential for accurate translation. This chain is Large ribosomal subunit protein bL12, found in Paracidovorax citrulli (strain AAC00-1) (Acidovorax citrulli).